Consider the following 526-residue polypeptide: Amine oxidase [flavin-containing] A (526 aa).

M1 bears the N-acetylmethionine mark. Residues 1–497 (MTDLEKPNLA…HTFLERNLPS (497 aa)) lie on the Cytoplasmic side of the membrane. S383 is subject to Phosphoserine. Residue C406 is modified to S-8alpha-FAD cysteine. A helical; Anchor for type IV membrane protein membrane pass occupies residues 498–518 (VPGLLKITGVSTSVALLCFVL). Topologically, residues 519–526 (YKIKKLPC) are mitochondrial intermembrane. Residues 520 to 522 (KIK) are interaction with membrane phospholipid headgroups.

This sequence belongs to the flavin monoamine oxidase family. As to quaternary structure, monomer, homo- or heterodimer (containing two subunits of similar size). Each subunit contains a covalently bound flavin. Enzymatically active as monomer. FAD serves as cofactor.

The protein resides in the mitochondrion outer membrane. The enzyme catalyses a secondary aliphatic amine + O2 + H2O = a primary amine + an aldehyde + H2O2. The catalysed reaction is a primary methyl amine + O2 + H2O = an aldehyde + H2O2 + NH4(+). It carries out the reaction (R)-adrenaline + O2 + H2O = (R)-3,4-dihydroxymandelaldehyde + methylamine + H2O2. It catalyses the reaction dopamine + O2 + H2O = 3,4-dihydroxyphenylacetaldehyde + H2O2 + NH4(+). The enzyme catalyses tyramine + O2 + H2O = (4-hydroxyphenyl)acetaldehyde + H2O2 + NH4(+). The catalysed reaction is (R)-noradrenaline + O2 + H2O = (R)-3,4-dihydroxymandelaldehyde + H2O2 + NH4(+). It carries out the reaction serotonin + O2 + H2O = (5-hydroxyindol-3-yl)acetaldehyde + H2O2 + NH4(+). It catalyses the reaction kynuramine + O2 + H2O = 3-(2-aminophenyl)-3-oxopropanal + H2O2 + NH4(+). The enzyme catalyses tryptamine + O2 + H2O = indole-3-acetaldehyde + H2O2 + NH4(+). The catalysed reaction is 2-phenylethylamine + O2 + H2O = 2-phenylacetaldehyde + H2O2 + NH4(+). Functionally, catalyzes the oxidative deamination of primary and some secondary amine such as neurotransmitters, with concomitant reduction of oxygen to hydrogen peroxide and has important functions in the metabolism of neuroactive and vasoactive amines in the central nervous system and peripheral tissues. Preferentially oxidizes serotonin. Also catalyzes the oxidative deamination of kynuramine to 3-(2-aminophenyl)-3-oxopropanal that can spontaneously condense to 4-hydroxyquinoline. The sequence is that of Amine oxidase [flavin-containing] A from Rattus norvegicus (Rat).